The following is a 469-amino-acid chain: Putative F-box/LRR-repeat protein At5g02930 (469 aa).

The 51-residue stretch at 27-77 folds into the F-box domain; that stretch reads VDSISDLPDAVLQHIFSYIPTELAIRTSVLSKRWRHVWSETPHLSFEWLKV. 6 LRR repeats span residues 30–58, 178–203, 204–214, 223–250, 296–321, and 341–366; these read ISDLPDAVLQHIFSYIPTELAIRTSVLSK, DCTMSDESFLEILSGCPILESLSLKF, CMSLKYLNLSK, IERISYIRAPMLSMQIVAPYIHYLRLRD, TMLKTFQKVEKLTLGVNLLQMLSLSK, and IIRSVVPGIARLLQNLPGLKKITVYT.

This chain is Putative F-box/LRR-repeat protein At5g02930, found in Arabidopsis thaliana (Mouse-ear cress).